A 236-amino-acid polypeptide reads, in one-letter code: Endonuclease V (236 aa).

Positions 47 and 115 each coordinate Mg(2+).

Belongs to the endonuclease V family. Requires Mg(2+) as cofactor.

The protein resides in the cytoplasm. The enzyme catalyses Endonucleolytic cleavage at apurinic or apyrimidinic sites to products with a 5'-phosphate.. Functionally, DNA repair enzyme involved in the repair of deaminated bases. Selectively cleaves double-stranded DNA at the second phosphodiester bond 3' to a deoxyinosine leaving behind the intact lesion on the nicked DNA. In Xanthomonas campestris pv. campestris (strain 8004), this protein is Endonuclease V.